Reading from the N-terminus, the 170-residue chain is MHCPFCRHPDSRVVDSRTSEDGSSIRRRRQCPECGRRFTTVETTSLSVVKRSGVAQPFSREKVVAGVRKACQGRPVSEDDLALLARRVEETIRATGAAEVDAHEVGLSILGPLRELDEVAYLRFASVYRGFSSLEDFEAAITALRAERENEGDPDADGSADAPVRLTTSV.

The segment at 3 to 34 (CPFCRHPDSRVVDSRTSEDGSSIRRRRQCPEC) is a zinc-finger region. Positions 46-136 (LSVVKRSGVA…VYRGFSSLED (91 aa)) constitute an ATP-cone domain. A disordered region spans residues 148–170 (RENEGDPDADGSADAPVRLTTSV).

This sequence belongs to the NrdR family. It depends on Zn(2+) as a cofactor.

Functionally, negatively regulates transcription of bacterial ribonucleotide reductase nrd genes and operons by binding to NrdR-boxes. This chain is Transcriptional repressor NrdR, found in Beutenbergia cavernae (strain ATCC BAA-8 / DSM 12333 / CCUG 43141 / JCM 11478 / NBRC 16432 / NCIMB 13614 / HKI 0122).